A 144-amino-acid polypeptide reads, in one-letter code: MMYRNNLLISFDFGTKNIGVAIGQMKTNTSKPLESVSYVKGVPNWGKINNIILLWEPKYIIVGLPLNMDGSYQTSTIKAKKFAKQLRNKFFMPVMMHDERLTTIEAKSVLFKKYGYKGLKKKLIDSESAVIILDSWMNSIYFKK.

The protein belongs to the YqgF nuclease family.

The protein localises to the cytoplasm. Its function is as follows. Could be a nuclease involved in processing of the 5'-end of pre-16S rRNA. This is Putative pre-16S rRNA nuclease from Wigglesworthia glossinidia brevipalpis.